The chain runs to 88 residues: Otospiralin (88 aa).

An N-terminal signal peptide occupies residues 1–21 (MQACMVPGLALCLLLGSLTEA).

Belongs to the otospiralin family. As to expression, ear specific.

It localises to the secreted. Functionally, may be essential for the survival of the neurosensory epithelium of the inner ear. This Cavia porcellus (Guinea pig) protein is Otospiralin (OTOS).